Reading from the N-terminus, the 156-residue chain is CD-NTase-associated protein 8 (156 aa).

It belongs to the bacterial HORMA family. HORMA3 subfamily. As to quaternary structure, interacts with Cap7 (also called HORMA2) and CdnC; forms CdnD:Cap7:Cap8 (also called CdnD:HORMA2:HORMA3) complexes with stoichiometries of 1:1:1 and 2:1:1.

In terms of biological role, CBASS (cyclic oligonucleotide-based antiphage signaling system) provides immunity against bacteriophage. The CD-NTase protein synthesizes cyclic nucleotides in response to infection; these serve as specific second messenger signals. The signals activate a diverse range of effectors, leading to bacterial cell death and thus abortive phage infection. A type III-C(AAA) CBASS system. Its function is as follows. A member of the CBASS system in this bacteria. It does not seem to bind a closure peptide, its exact function is unknown. The polypeptide is CD-NTase-associated protein 8 (Pseudomonas aeruginosa).